A 90-amino-acid chain; its full sequence is Cell division topological specificity factor (90 aa).

The protein belongs to the MinE family.

Functionally, prevents the cell division inhibition by proteins MinC and MinD at internal division sites while permitting inhibition at polar sites. This ensures cell division at the proper site by restricting the formation of a division septum at the midpoint of the long axis of the cell. The polypeptide is Cell division topological specificity factor (Francisella philomiragia subsp. philomiragia (strain ATCC 25017 / CCUG 19701 / FSC 153 / O#319-036)).